The following is a 263-amino-acid chain: N-acyl homoserine lactonase AttM (263 aa).

The Zn(2+) site is built by His103, His105, Asp107, His108, His180, Asp202, and His247.

It belongs to the metallo-beta-lactamase superfamily. It depends on Zn(2+) as a cofactor.

It carries out the reaction an N-acyl-L-homoserine lactone + H2O = an N-acyl-L-homoserine + H(+). The polypeptide is N-acyl homoserine lactonase AttM (Azorhizobium caulinodans (strain ATCC 43989 / DSM 5975 / JCM 20966 / LMG 6465 / NBRC 14845 / NCIMB 13405 / ORS 571)).